A 307-amino-acid polypeptide reads, in one-letter code: L-lactate dehydrogenase (307 aa).

NAD(+) contacts are provided by residues Val-13, Asp-34, Arg-39, Tyr-64, and Gly-78–Val-79. Arg-87 lines the substrate pocket. NAD(+) is bound at residue Ser-100. Substrate is bound at residue Asn-119–Asp-122. Residue Thr-142 participates in NAD(+) binding. Asp-147–Arg-150 provides a ligand contact to substrate. His-174 serves as the catalytic Proton acceptor. Thr-224 provides a ligand contact to substrate.

It belongs to the LDH/MDH superfamily. LDH family. As to quaternary structure, homotetramer.

It is found in the cytoplasm. It catalyses the reaction (S)-lactate + NAD(+) = pyruvate + NADH + H(+). Its pathway is fermentation; pyruvate fermentation to lactate; (S)-lactate from pyruvate: step 1/1. Catalyzes the conversion of lactate to pyruvate. The sequence is that of L-lactate dehydrogenase from Lactobacillus delbrueckii subsp. bulgaricus (strain ATCC BAA-365 / Lb-18).